A 514-amino-acid chain; its full sequence is Maturase K (514 aa).

This sequence belongs to the intron maturase 2 family. MatK subfamily.

It localises to the plastid. It is found in the chloroplast. Usually encoded in the trnK tRNA gene intron. Probably assists in splicing its own and other chloroplast group II introns. The chain is Maturase K from Lepidozamia peroffskyana (Peroffsky's lepidozamia).